The sequence spans 548 residues: ATP synthase subunit alpha (548 aa).

172–179 (GDRKTGKT) contacts ATP. A disordered region spans residues 526–548 (AEAMDEADVEKESVKVRKPAPKK).

This sequence belongs to the ATPase alpha/beta chains family. As to quaternary structure, F-type ATPases have 2 components, CF(1) - the catalytic core - and CF(0) - the membrane proton channel. CF(1) has five subunits: alpha(3), beta(3), gamma(1), delta(1), epsilon(1). CF(0) has three main subunits: a(1), b(2) and c(9-12). The alpha and beta chains form an alternating ring which encloses part of the gamma chain. CF(1) is attached to CF(0) by a central stalk formed by the gamma and epsilon chains, while a peripheral stalk is formed by the delta and b chains.

The protein resides in the cell membrane. It carries out the reaction ATP + H2O + 4 H(+)(in) = ADP + phosphate + 5 H(+)(out). Produces ATP from ADP in the presence of a proton gradient across the membrane. The alpha chain is a regulatory subunit. This chain is ATP synthase subunit alpha, found in Mycolicibacterium gilvum (strain PYR-GCK) (Mycobacterium gilvum (strain PYR-GCK)).